The following is a 354-amino-acid chain: Thiamine thiazole synthase (354 aa).

Residues Ala-83, 104-105 (EA), Gly-112, and Val-177 each bind substrate. At Cys-210 the chain carries 2,3-didehydroalanine (Cys). Substrate contacts are provided by residues Asp-212, His-227, Met-305, and 315-317 (RMG).

This sequence belongs to the THI4 family. Homooctamer. It depends on Fe cation as a cofactor. Post-translationally, during the catalytic reaction, a sulfide is transferred from Cys-210 to a reaction intermediate, generating a dehydroalanine residue.

It is found in the cytoplasm. Its subcellular location is the nucleus. The enzyme catalyses [ADP-thiazole synthase]-L-cysteine + glycine + NAD(+) = [ADP-thiazole synthase]-dehydroalanine + ADP-5-ethyl-4-methylthiazole-2-carboxylate + nicotinamide + 3 H2O + 2 H(+). Functionally, involved in biosynthesis of the thiamine precursor thiazole. Catalyzes the conversion of NAD and glycine to adenosine diphosphate 5-(2-hydroxyethyl)-4-methylthiazole-2-carboxylic acid (ADT), an adenylated thiazole intermediate. The reaction includes an iron-dependent sulfide transfer from a conserved cysteine residue of the protein to a thiazole intermediate. The enzyme can only undergo a single turnover, which suggests it is a suicide enzyme. May have additional roles in adaptation to various stress conditions and in DNA damage tolerance. In Candida albicans (strain SC5314 / ATCC MYA-2876) (Yeast), this protein is Thiamine thiazole synthase.